The following is a 145-amino-acid chain: Granulysin (145 aa).

An N-terminal signal peptide occupies residues 1-22; that stretch reads MATWALLLLAAMLLGNPGLVFS. In terms of domain architecture, Saposin B-type spans 62-142; it reads LGRDYRTCLT…EDLRLCIPST (81 aa). 2 disulfides stabilise this stretch: Cys-69-Cys-132 and Cys-96-Cys-107.

Post-translationally, a 9 kDa form is produced by proteolytic processing of a 15 kDa protein. As to expression, expressed in natural killer and T-cells.

It is found in the secreted. Antimicrobial protein that kills intracellular pathogens. Active against a broad range of microbes, including Gram-positive and Gram-negative bacteria, fungi, and parasites. Kills Mycobacterium tuberculosis. This Homo sapiens (Human) protein is Granulysin (GNLY).